A 228-amino-acid chain; its full sequence is Ribonuclease 3 (228 aa).

Residues 7–132 (LSAFMDRLGH…VIAAVYLDAG (126 aa)) form the RNase III domain. Residue Glu-45 coordinates Mg(2+). Residue Asp-49 is part of the active site. 2 residues coordinate Mg(2+): Asp-118 and Glu-121. Glu-121 is a catalytic residue. Positions 157–226 (DPKTALQEWA…AKALLERLER (70 aa)) constitute a DRBM domain.

The protein belongs to the ribonuclease III family. In terms of assembly, homodimer. Requires Mg(2+) as cofactor.

It is found in the cytoplasm. The enzyme catalyses Endonucleolytic cleavage to 5'-phosphomonoester.. In terms of biological role, digests double-stranded RNA. Involved in the processing of ribosomal RNA precursors and of some mRNAs. Complements an E.coli disruption mutant, but the E.coli enzyme does not cleave R.capsulatus rRNA precursor, showing substrate recognition is different. Probably also processes some mRNAs, and tRNAs when they are encoded in the rRNA operon. Probably processes pre-crRNA and tracrRNA of type II CRISPR loci if present in the organism. The protein is Ribonuclease 3 (rnc) of Rhodobacter capsulatus (Rhodopseudomonas capsulata).